We begin with the raw amino-acid sequence, 86 residues long: Large ribosomal subunit protein bL27 (86 aa).

The interval Met-1–Lys-24 is disordered.

The protein belongs to the bacterial ribosomal protein bL27 family.

In Prochlorococcus marinus (strain MIT 9301), this protein is Large ribosomal subunit protein bL27.